Consider the following 323-residue polypeptide: NADH-cytochrome b5 reductase 2 (323 aa).

The helical transmembrane segment at 32-48 (LAPIYLGVGLIGLGVGL) threads the bilayer. An FAD-binding FR-type domain is found at 72–177 (QGWVDLKLAQ…KGPIPKYPWE (106 aa)). Residue 180–215 (KHKHICLIAGGTGITPMYQLARKIFKDPEDQTKVTL) participates in FAD binding.

The protein belongs to the flavoprotein pyridine nucleotide cytochrome reductase family. The cofactor is FAD.

The protein resides in the mitochondrion outer membrane. It catalyses the reaction 2 Fe(III)-[cytochrome b5] + NADH = 2 Fe(II)-[cytochrome b5] + NAD(+) + H(+). In terms of biological role, may mediate the reduction of outer membrane cytochrome b5. This Aspergillus fumigatus (strain ATCC MYA-4609 / CBS 101355 / FGSC A1100 / Af293) (Neosartorya fumigata) protein is NADH-cytochrome b5 reductase 2 (mcr1).